A 146-amino-acid polypeptide reads, in one-letter code: Large ribosomal subunit protein bL21 (146 aa).

Positions 95–104 (PKKKTRRKMG) are enriched in basic residues. The interval 95–146 (PKKKTRRKMGHRQELTRVMVKSISISKSTPKSSPKTEATKKSTSSKASKPEN) is disordered. The span at 115 to 146 (KSISISKSTPKSSPKTEATKKSTSSKASKPEN) shows a compositional bias: low complexity.

Belongs to the bacterial ribosomal protein bL21 family. As to quaternary structure, part of the 50S ribosomal subunit. Contacts protein L20.

In terms of biological role, this protein binds to 23S rRNA in the presence of protein L20. The sequence is that of Large ribosomal subunit protein bL21 from Prochlorococcus marinus (strain MIT 9515).